The sequence spans 132 residues: uncharacterized protein (132 aa).

Positions 1-19 (MKKALFLVGLVFTAGVISS) are cleaved as a signal peptide. Cysteine 20 carries the N-palmitoyl cysteine lipid modification. Cysteine 20 carries the S-diacylglycerol cysteine lipid modification.

Its subcellular location is the cell membrane. This is an uncharacterized protein from Aquifex aeolicus (strain VF5).